Reading from the N-terminus, the 2183-residue chain is Coagulation factor V (2183 aa).

The first 19 residues, 1 to 19, serve as a signal peptide directing secretion; that stretch reads MLLVCPCFFLLVVLGTRWA. Plastocyanin-like domains follow at residues 30–192, 202–328, 347–524, and 534–682; these read QLRQ…LLIC, TQKM…IKNC, KRWE…LLIC, and VQRV…DVKC. 2 F5/8 type A domains span residues 30 to 328 and 347 to 682; these read QLRQ…IKNC and KRWE…DVKC. 2 residues coordinate Ca(2+): Asp-138 and Asp-139. Asn-176, Asn-238, and Asn-381 each carry an N-linked (GlcNAc...) asparagine glycan. Thr-638 carries the phosphothreonine modification. The tract at residues 691 to 1533 is b; sequence SYEIYEPPAP…PDTIAAWYLR (843 aa). 2 positions are modified to sulfotyrosine: Tyr-692 and Tyr-725. The propeptide at 737–1533 is activation peptide (connecting region); the sequence is SFKNSSLNPE…PDTIAAWYLR (797 aa). N-linked (GlcNAc...) asparagine glycosylation occurs at Asn-841. Disordered regions lie at residues 884–904, 947–1045, and 1059–1144; these read PAGKTGRHSNPKNSYSGMKSE, DVDK…FPDR, and ETAL…YDLS. The tract at residues 892–908 is 1 X 17 AA tandem repeats; sequence SNPKNSYSGMKSEEDIP. One copy of the 1-1 repeat lies at 892-911; it reads SNPKNSYSGMKSEEDIPSEL. Ser-903 carries the post-translational modification Phosphoserine. Positions 951–975 are enriched in polar residues; the sequence is LTNSPQNQNITVPRGESTSHTNTTR. Residues Asn-959 and Asn-972 are each glycosylated (N-linked (GlcNAc...) asparagine). Positions 1010-1021 are enriched in basic residues; that stretch reads RTRKKKKNKKLA. Polar residues-rich tracts occupy residues 1059–1099 and 1120–1134; these read ETAL…SLDL and THSTTDPSYRSSPPE. 32 tandem repeats follow at residues 1175–1183, 1184–1192, 1193–1201, 1202–1210, 1211–1219, 1220–1228, 1229–1237, 1238–1246, 1247–1255, 1256–1264, 1265–1273, 1274–1282, 1283–1291, 1292–1299, 1300–1308, 1309–1316, 1317–1325, 1326–1334, 1335–1341, 1342–1350, 1351–1359, 1360–1368, 1369–1377, 1378–1386, 1387–1395, 1396–1404, 1405–1413, 1414–1422, 1423–1431, 1432–1440, 1441–1449, and 1452–1461. The tract at residues 1175 to 1461 is 32 X 9 AA approximate tandem repeats of [TNP]-L-S-P-D-L-S-Q-T; that stretch reads IPSSDLSLFT…PSPSPTLNNT (287 aa). Residues 1204–1312 form a disordered region; that stretch reads SPEDNQKTSS…PDLGQVPLFP (109 aa). The span at 1228–1251 shows a compositional bias: polar residues; that stretch reads KTSSPDLGQVSLSPDDNQKTSSPD. Over residues 1292–1304 the composition is skewed to polar residues; it reads PLSSDNQKTSSPD. Residues 1403-1462 are disordered; that stretch reads QTNPALNHGHKASSADPDQASYPPDSGQASSLPELNRTLPHPDLTHIPPPSPSPTLNNTS. A glycan (N-linked (GlcNAc...) asparagine) is linked at Asn-1438. Plastocyanin-like domains follow at residues 1538–1711 and 1721–1866; these read HKKF…LLIC and NLPM…DKEC. The F5/8 type A 3 domain occupies 1538–1866; the sequence is HKKFYYIAAE…TPFLIIDKEC (329 aa). Cu cation-binding residues include His-1802 and His-1804. Asn-1811 is a glycosylation site (N-linked (GlcNAc...) asparagine). 2 F5/8 type C domains span residues 1866-2020 and 2025-2180; these read CKMP…LQGC and CSTP…LFGC. 2 disulfide bridges follow: Cys-1866–Cys-2020 and Cys-2025–Cys-2180.

Belongs to the multicopper oxidase family. Factor Va, the activated form of factor V, is composed of a heavy chain and a light chain, non-covalently bound. The interaction between the two chains is calcium-dependent. Forms heterodimer with SERPINA5. In terms of processing, thrombin activates factor V proteolytically to the active cofactor, factor Va (formation of a heavy chain at the N-terminus and a light chain at the C-terminus). Post-translationally, sulfation is required for efficient thrombin cleavage and activation and for full procoagulant activity. Activated protein C inactivates factor V and factor Va by proteolytic degradation.

It localises to the secreted. Inhibited by SERPINA5. Functionally, central regulator of hemostasis. It serves as a critical cofactor for the prothrombinase activity of factor Xa that results in the activation of prothrombin to thrombin. The chain is Coagulation factor V (F5) from Mus musculus (Mouse).